The primary structure comprises 295 residues: Small ribosomal subunit protein uS2 (295 aa).

Ser-2 carries the N-acetylserine modification. Ser-43 is subject to Phosphoserine. Residue Lys-52 is modified to N6-acetyllysine. Residues 54 to 113 (TWEKLLLAARAIVAIENPADVSVISSRNTGQRAVLKFAAATGATPIAGRFTPGTFTNQIQ) form an interaction with PPP1R16B region. Lys-89 carries the N6-acetyllysine; alternate modification. Lys-89 is covalently cross-linked (Glycyl lysine isopeptide (Lys-Gly) (interchain with G-Cter in SUMO2); alternate). A Phosphothreonine modification is found at Thr-97. 2 laminin-binding regions span residues 161–180 (IPCNNKGAHSVGLMWWMLAR) and 205–229 (RDPEEIEKEEQAAAEKAVTKEEFQG). [DE]-W-[ST] repeat units follow at residues 230–232 (EWT), 247–249 (DWS), 266–268 (DWS), 275–277 (DWS), and 293–295 (EWS). A laminin-binding region spans residues 242–295 (QPEVADWSEGVQVPSVPIQQFPTEDWSAQPATEDWSAAPTAQATEWVGTTTEWS). A disordered region spans residues 266 to 295 (DWSAQPATEDWSAAPTAQATEWVGTTTEWS). Positions 280-295 (PTAQATEWVGTTTEWS) are enriched in polar residues.

The protein belongs to the universal ribosomal protein uS2 family. In terms of assembly, monomer (37LRP) and homodimer (67LR). Component of the small ribosomal subunit. Mature ribosomes consist of a small (40S) and a large (60S) subunit. The 40S subunit contains about 33 different proteins and 1 molecule of RNA (18S). The 60S subunit contains about 49 different proteins and 3 molecules of RNA (28S, 5.8S and 5S). Interacts with RPS21. Interacts with several laminins including at least LAMB1. Interacts with MDK. The mature dimeric form interacts with PPP1R16B (via its fourth ankyrin repeat). Interacts with PPP1CA only in the presence of PPP1R16B. Post-translationally, acylated. Acylation may be a prerequisite for conversion of the monomeric 37 kDa laminin receptor precursor (37LRP) to the mature dimeric 67 kDa laminin receptor (67LR), and may provide a mechanism for membrane association. In terms of processing, cleaved by stromelysin-3 (ST3) at the cell surface. Cleavage by stromelysin-3 may be a mechanism to alter cell-extracellular matrix interactions.

Its subcellular location is the cell membrane. It localises to the cytoplasm. The protein localises to the nucleus. In terms of biological role, required for the assembly and/or stability of the 40S ribosomal subunit. Required for the processing of the 20S rRNA-precursor to mature 18S rRNA in a late step of the maturation of 40S ribosomal subunits. Also functions as a cell surface receptor for laminin. Plays a role in cell adhesion to the basement membrane and in the consequent activation of signaling transduction pathways. May play a role in cell fate determination and tissue morphogenesis. Also acts as a receptor for several other ligands, including the pathogenic prion protein, viruses, and bacteria. Acts as a PPP1R16B-dependent substrate of PPP1CA. This Oryctolagus cuniculus (Rabbit) protein is Small ribosomal subunit protein uS2.